Here is a 218-residue protein sequence, read N- to C-terminus: GTP cyclohydrolase 1 (218 aa).

3 residues coordinate Zn(2+): Cys-109, His-112, and Cys-180.

This sequence belongs to the GTP cyclohydrolase I family. As to quaternary structure, toroid-shaped homodecamer, composed of two pentamers of five dimers.

It catalyses the reaction GTP + H2O = 7,8-dihydroneopterin 3'-triphosphate + formate + H(+). It functions in the pathway cofactor biosynthesis; 7,8-dihydroneopterin triphosphate biosynthesis; 7,8-dihydroneopterin triphosphate from GTP: step 1/1. This chain is GTP cyclohydrolase 1, found in Aeromonas hydrophila subsp. hydrophila (strain ATCC 7966 / DSM 30187 / BCRC 13018 / CCUG 14551 / JCM 1027 / KCTC 2358 / NCIMB 9240 / NCTC 8049).